The sequence spans 376 residues: Protein RecA (376 aa).

Gly-66–Thr-73 contributes to the ATP binding site. Positions Val-329–Ser-376 are disordered. Over residues Ala-338–Ser-376 the composition is skewed to low complexity.

The protein belongs to the RecA family.

It localises to the cytoplasm. Its function is as follows. Can catalyze the hydrolysis of ATP in the presence of single-stranded DNA, the ATP-dependent uptake of single-stranded DNA by duplex DNA, and the ATP-dependent hybridization of homologous single-stranded DNAs. It interacts with LexA causing its activation and leading to its autocatalytic cleavage. This chain is Protein RecA, found in Streptomyces rimosus.